Reading from the N-terminus, the 122-residue chain is Large ribosomal subunit protein bL17 (122 aa).

This sequence belongs to the bacterial ribosomal protein bL17 family. In terms of assembly, part of the 50S ribosomal subunit. Contacts protein L32.

The chain is Large ribosomal subunit protein bL17 from Neisseria gonorrhoeae (strain ATCC 700825 / FA 1090).